A 1013-amino-acid polypeptide reads, in one-letter code: MDIS1-interacting receptor like kinase 1 (1013 aa).

Residues 1 to 23 (MKMKIIVLFLYYCYIGSTSSVLA) form the signal peptide. Topologically, residues 24 to 633 (SIDNVNELSV…SSHSSLHGKR (610 aa)) are extracellular. N-linked (GlcNAc...) asparagine glycans are attached at residues asparagine 61, asparagine 82, asparagine 101, asparagine 137, asparagine 146, asparagine 151, and asparagine 155. LRR repeat units follow at residues 70 to 94 (NGNV…ISQL), 95 to 117 (SSLV…SIPP), 119 to 137 (KSID…LFSN), 139 to 163 (SLGL…LGNL), 164 to 186 (VSLE…SFKN), 187 to 213 (LQKL…QLPS), 215 to 234 (ETAI…EFGN), 235 to 259 (INSL…LGKL), 260 to 283 (KSLE…IGSI), 284 to 307 (TTLK…ITKL), 308 to 331 (KNLQ…ISSL), 333 to 355 (QLQV…LGKN), 357 to 379 (PLQW…LCNK), 381 to 403 (NLTK…LSTC), 405 to 426 (SLVR…GFGK), 427 to 451 (LEKL…ISDS), 453 to 475 (SLSF…ILSI), 477 to 498 (NLQA…QFQD), 499 to 523 (CPSL…IASC), 525 to 547 (KLVS…ITTM), 548 to 571 (SALA…IGTS), and 573 to 595 (ALEL…GFLK). Residue asparagine 199 is glycosylated (N-linked (GlcNAc...) asparagine). Asparagine 271 carries N-linked (GlcNAc...) asparagine glycosylation. N-linked (GlcNAc...) asparagine glycosylation is present at asparagine 341. 3 N-linked (GlcNAc...) asparagine glycosylation sites follow: asparagine 381, asparagine 389, and asparagine 417. Asparagine 535, asparagine 557, and asparagine 578 each carry an N-linked (GlcNAc...) asparagine glycan. A helical membrane pass occupies residues 634–654 (IVAGWLIGIASVLALGILTIV). The Cytoplasmic segment spans residues 655–1013 (TRTLYKKWYS…FSTSPVNGLL (359 aa)). Threonine 691 is modified (phosphothreonine). One can recognise a Protein kinase domain in the interval 699–983 (IKESNMIGMG…SMLGEAKPRR (285 aa)). Residues 705-713 (IGMGATGIV) and lysine 728 contribute to the ATP site. Threonine 710 carries the post-translational modification Phosphothreonine; by autocatalysis. A phosphothreonine; by autocatalysis mark is found at threonine 741 and threonine 742. Tyrosine 777 and tyrosine 818 each carry phosphotyrosine. Aspartate 831 functions as the Proton acceptor in the catalytic mechanism. Position 862 is a phosphothreonine; by autocatalysis (threonine 862). Serine 864 is subject to Phosphoserine; by autocatalysis. Tyrosine 872 bears the Phosphotyrosine mark. Tyrosine 879 is modified (phosphotyrosine; by autocatalysis). A phosphothreonine; by autocatalysis mark is found at threonine 880 and threonine 992. Positions 976 to 1013 (LGEAKPRRKSNSNEENTSRSLAEKHSSVFSTSPVNGLL) are disordered. Over residues 1002–1013 (SVFSTSPVNGLL) the composition is skewed to polar residues.

Belongs to the protein kinase superfamily. Ser/Thr protein kinase family. As to quaternary structure, homodimer. Interacts with MDIS1 and LURE1.2. Autophosphorylation induced by the interaction with LURE1.2. Expressed in pollen tubes.

The protein resides in the cell membrane. It catalyses the reaction L-seryl-[protein] + ATP = O-phospho-L-seryl-[protein] + ADP + H(+). The enzyme catalyses L-threonyl-[protein] + ATP = O-phospho-L-threonyl-[protein] + ADP + H(+). Functionally, involved in the regulation of procambium maintenance and polarity during vascular-tissue development. Involved in the pollen tube perception of the female signal. Phosphorylates MDSI1. The protein is MDIS1-interacting receptor like kinase 1 of Arabidopsis thaliana (Mouse-ear cress).